A 420-amino-acid chain; its full sequence is Chaperone protein dnaJ 3 (420 aa).

Residues 14-75 (KFYEILGVPK…EKREIYDQYG (62 aa)) form the J domain. The CR-type zinc-finger motif lies at 135-219 (GTMKKLSLSR…CKGDKVIPEK (85 aa)). Zn(2+) is bound by residues Cys148, Cys151, Cys164, Cys167, Cys191, Cys194, Cys207, and Cys210. 4 CXXCXGXG motif repeats span residues 148 to 155 (CSKCNGKG), 164 to 171 (CGGCQGSG), 191 to 198 (CNECKGTG), and 207 to 214 (CPQCKGDK). Residues 376–420 (ETTLHDVNIEDEMRRKAQAQREAYDDDDEDDDHPGGAQRVQCAQQ) form a disordered region. Basic and acidic residues predominate over residues 377–390 (TTLHDVNIEDEMRR). Cys417 carries the cysteine methyl ester modification. A lipid anchor (S-farnesyl cysteine) is attached at Cys417. Residues 418-420 (AQQ) constitute a propeptide, removed in mature form.

Belongs to the DnaJ family. A/I subfamily. As to quaternary structure, homodimer. The cofactor is Zn(2+). In terms of processing, farnesylated. As to expression, roots, shoots, flowers, siliques and cotyledons.

It is found in the membrane. In terms of biological role, plays a continuous role in plant development probably in the structural organization of compartments. The chain is Chaperone protein dnaJ 3 (ATJ3) from Arabidopsis thaliana (Mouse-ear cress).